The primary structure comprises 339 residues: Terpene synthase 9 (339 aa).

Positions 79–84 (DDFLES) match the DDxx(x)D/E motif motif. An NDxxSxxxD/E motif motif is present at residues 219–227 (NDCASYAKE).

Belongs to the terpene synthase family.

The enzyme catalyses (2E,6E)-farnesyl diphosphate = (-)-beta-barbatene + diphosphate. The catalysed reaction is (2E,6E)-farnesyl diphosphate = (E)-beta-farnesene + diphosphate. It catalyses the reaction (2E)-geranyl diphosphate = (Z)-beta-ocimene + diphosphate. It carries out the reaction (2E)-geranyl diphosphate + H2O = linalool + diphosphate. The enzyme catalyses (2E)-geranyl diphosphate = beta-myrcene + diphosphate. Functionally, terpene synthase that converts its substrate farnesyl diphosphate (FPP) into the sesquiterpene beta-barbatene as a major product as well as (E)-beta-farnesene as a minor product. Is also able to convert geranyl diphosphate (GPP) into a mixture of monoterpenes including (Z)-beta-ocimene, linalool, beta-myrcene, limonene and alpha-terpineol. In Dictyostelium discoideum (Social amoeba), this protein is Terpene synthase 9.